Reading from the N-terminus, the 223-residue chain is MDKMLFWVSVFTIFLDVFAQTDLDKKVFVFPRESSSDHVNLITKLETPLQEFTVCLRAYSDLSRHYSLFSYNTPGKDNELLIYKEKLGEYSLYIGGTKVTARVPEEILAPVHICTSWESSSGIAEFWINGKPLVKKGLKRGYSVAAHPKIILGQEQDSYGGKFDRGQSFLGEIGDVYMWDSVLSPDDVQAVYYGSYVNGSILNWQALNYELNDYVIIKPRVWD.

Residues 1 to 19 form the signal peptide; that stretch reads MDKMLFWVSVFTIFLDVFA. In terms of domain architecture, Pentraxin (PTX) spans 24-223; sequence DKKVFVFPRE…YVIIKPRVWD (200 aa). C55 and C114 are joined by a disulfide. D77, N78, E155, Q156, D157, and Q167 together coordinate Ca(2+). The N-linked (GlcNAc...) asparagine glycan is linked to N198.

It belongs to the pentraxin family. As to quaternary structure, homopentamer. Pentraxin (or pentaxin) have a discoid arrangement of 5 non-covalently bound subunits. Requires Ca(2+) as cofactor.

The protein localises to the secreted. The sequence is that of Serum amyloid P-component (PTX2) from Cavia porcellus (Guinea pig).